An 86-amino-acid polypeptide reads, in one-letter code: Synergistic-like venom protein (86 aa).

An N-terminal signal peptide occupies residues 1-21 (MKTLLLTLVVVTIVCLDLGYT). Intrachain disulfides connect Cys-24-Cys-45, Cys-38-Cys-63, Cys-67-Cys-78, and Cys-79-Cys-84.

This sequence belongs to the three-finger toxin family. Short-chain subfamily. Aminergic toxin sub-subfamily. In terms of tissue distribution, expressed by the venom gland.

The protein localises to the secreted. The polypeptide is Synergistic-like venom protein (Dendroaspis angusticeps (Eastern green mamba)).